Here is a 302-residue protein sequence, read N- to C-terminus: Catechol 1,2-dioxygenase (302 aa).

Fe cation-binding residues include Tyr164, Tyr198, His222, and His224.

The protein belongs to the intradiol ring-cleavage dioxygenase family. The cofactor is Fe(3+).

It catalyses the reaction catechol + O2 = cis,cis-muconate + 2 H(+). It functions in the pathway aromatic compound metabolism; beta-ketoadipate pathway; 5-oxo-4,5-dihydro-2-furylacetate from catechol: step 1/3. The sequence is that of Catechol 1,2-dioxygenase (pheB) from Pseudomonas sp. (strain EST1001).